A 157-amino-acid polypeptide reads, in one-letter code: Regulatory protein RecX (157 aa).

Belongs to the RecX family.

It is found in the cytoplasm. Functionally, modulates RecA activity. The protein is Regulatory protein RecX of Leptothrix cholodnii (strain ATCC 51168 / LMG 8142 / SP-6) (Leptothrix discophora (strain SP-6)).